The chain runs to 482 residues: Glutamate--tRNA ligase 1 (482 aa).

Residues 18-28 (PSPTGYLHLGG) carry the 'HIGH' region motif. The 'KMSKS' region signature appears at 252-256 (KLSKR). Lysine 255 serves as a coordination point for ATP.

This sequence belongs to the class-I aminoacyl-tRNA synthetase family. Glutamate--tRNA ligase type 1 subfamily. Monomer.

The protein localises to the cytoplasm. The catalysed reaction is tRNA(Glu) + L-glutamate + ATP = L-glutamyl-tRNA(Glu) + AMP + diphosphate. Functionally, catalyzes the attachment of glutamate to tRNA(Glu) in a two-step reaction: glutamate is first activated by ATP to form Glu-AMP and then transferred to the acceptor end of tRNA(Glu). This Erythrobacter litoralis (strain HTCC2594) protein is Glutamate--tRNA ligase 1.